We begin with the raw amino-acid sequence, 487 residues long: N-succinylglutamate 5-semialdehyde dehydrogenase (487 aa).

Residue 221–226 participates in NAD(+) binding; the sequence is GSSRTG. Active-site residues include glutamate 244 and cysteine 278.

It belongs to the aldehyde dehydrogenase family. AstD subfamily.

It carries out the reaction N-succinyl-L-glutamate 5-semialdehyde + NAD(+) + H2O = N-succinyl-L-glutamate + NADH + 2 H(+). It participates in amino-acid degradation; L-arginine degradation via AST pathway; L-glutamate and succinate from L-arginine: step 4/5. Functionally, catalyzes the NAD-dependent reduction of succinylglutamate semialdehyde into succinylglutamate. The protein is N-succinylglutamate 5-semialdehyde dehydrogenase of Pseudomonas putida (strain W619).